The sequence spans 106 residues: Toxin-like structure LSTX-D5 (106 aa).

An N-terminal signal peptide occupies residues 1-20 (MMKVLVVVALLVTLISYSSS). Residues 21-41 (EGIDDLETDELLSLMANEQTR) constitute a propeptide that is removed on maturation. Disulfide bonds link Cys-45/Cys-60, Cys-52/Cys-69, Cys-59/Cys-85, and Cys-71/Cys-83.

Belongs to the neurotoxin 19 (CSTX) family. 02 (D7) subfamily. Expressed by the venom gland.

It localises to the secreted. The sequence is that of Toxin-like structure LSTX-D5 from Lycosa singoriensis (Wolf spider).